The following is a 126-amino-acid chain: Large ribosomal subunit protein uL22 (126 aa).

Belongs to the universal ribosomal protein uL22 family. As to quaternary structure, part of the 50S ribosomal subunit.

Its function is as follows. This protein binds specifically to 23S rRNA; its binding is stimulated by other ribosomal proteins, e.g. L4, L17, and L20. It is important during the early stages of 50S assembly. It makes multiple contacts with different domains of the 23S rRNA in the assembled 50S subunit and ribosome. Functionally, the globular domain of the protein is located near the polypeptide exit tunnel on the outside of the subunit, while an extended beta-hairpin is found that lines the wall of the exit tunnel in the center of the 70S ribosome. This Zymomonas mobilis subsp. mobilis (strain ATCC 31821 / ZM4 / CP4) protein is Large ribosomal subunit protein uL22.